The chain runs to 293 residues: uncharacterized protein (293 aa).

The helical transmembrane segment at 55–77 (IVLAKEIFAVAFFSLGMSCLLMA) threads the bilayer.

Its subcellular location is the membrane. This is an uncharacterized protein from Caenorhabditis elegans.